Here is a 359-residue protein sequence, read N- to C-terminus: Type-1 angiotensin II receptor (359 aa).

Topologically, residues 1–25 (MILNSSTEDGIKRIQDDCPKAGRHS) are extracellular. Residue Asn-4 is glycosylated (N-linked (GlcNAc...) asparagine). The angiotensin II site is built by Gln-15 and Asp-17. 2 cysteine pairs are disulfide-bonded: Cys-18-Cys-274 and Cys-101-Cys-180. The helical transmembrane segment at 26-55 (YIFVMIPTLYSIIFVVGIFGNSLVVIVIYF) threads the bilayer. At 56-61 (YMKLKT) the chain is on the cytoplasmic side. The chain crosses the membrane as a helical span at residues 62 to 89 (VASVFLLNLALADICFLLTLPLWAVYTA). Over 90 to 98 (MEYRWPFGN) the chain is Extracellular. Residues 99 to 125 (YLCKIASASVSFNLYASVFLLTCLSID) form a helical membrane-spanning segment. The Cytoplasmic portion of the chain corresponds to 126 to 141 (RYLAIVHPMKSRLRRT). A helical membrane pass occupies residues 142-165 (MLVAKVTCVIIWLMAGLASLPAVI). At 166-190 (HRNVFFIENTNITVCAFHYESQNST) the chain is on the extracellular side. An angiotensin II-binding site is contributed by Arg-167. A glycan (N-linked (GlcNAc...) asparagine) is linked at Asn-176. Angiotensin II contacts are provided by Phe-182, His-183, and Tyr-184. Asn-188 is a glycosylation site (N-linked (GlcNAc...) asparagine). The helical transmembrane segment at 191-216 (LPIGLGLTKNILGFMFPFLIILTSYT) threads the bilayer. Residue Lys-199 participates in angiotensin II binding. Residues 217-239 (LIWKALKKAYEIQKNKPRNDDIF) lie on the Cytoplasmic side of the membrane. A helical transmembrane segment spans residues 240–268 (KIIMAIVLFFFFSWVPHQIFTFLDVLIQL). The Extracellular segment spans residues 269 to 278 (GIIHDCKISD). A helical membrane pass occupies residues 279–304 (IVDTAMPITICIAYFNNCLNPLFYGF). Topologically, residues 305–359 (LGKKFKKYFLQLLKYIPPKAKSHSTLSTKMSTLSYRPSDNVSSSAKKPVQCFEVE) are cytoplasmic. The span at 337-349 (LSYRPSDNVSSSA) shows a compositional bias: polar residues. The tract at residues 337–359 (LSYRPSDNVSSSAKKPVQCFEVE) is disordered. The S-palmitoyl cysteine moiety is linked to residue Cys-355.

It belongs to the G-protein coupled receptor 1 family. Interacts with MAS1. Interacts with ARRB1. Interacts with FLNA (via filamin repeat 21); increases PKA-mediated phosphorylation of FLNA. C-terminal Ser or Thr residues may be phosphorylated. As to expression, expressed in liver, kidney, adrenal gland, heart and colon.

Its subcellular location is the cell membrane. Its function is as follows. Receptor for angiotensin II, a vasoconstricting peptide, which acts as a key regulator of blood pressure and sodium retention by the kidney. The activated receptor in turn couples to G-alpha proteins G(q) (GNAQ, GNA11, GNA14 or GNA15) and thus activates phospholipase C and increases the cytosolic Ca(2+) concentrations, which in turn triggers cellular responses such as stimulation of protein kinase C. The protein is Type-1 angiotensin II receptor (AGTR1) of Cavia porcellus (Guinea pig).